The chain runs to 432 residues: Glutamate-1-semialdehyde 2,1-aminomutase 1 (432 aa).

N6-(pyridoxal phosphate)lysine is present on K268.

This sequence belongs to the class-III pyridoxal-phosphate-dependent aminotransferase family. HemL subfamily. Homodimer. The cofactor is pyridoxal 5'-phosphate.

It localises to the cytoplasm. It carries out the reaction (S)-4-amino-5-oxopentanoate = 5-aminolevulinate. Its pathway is porphyrin-containing compound metabolism; protoporphyrin-IX biosynthesis; 5-aminolevulinate from L-glutamyl-tRNA(Glu): step 2/2. This is Glutamate-1-semialdehyde 2,1-aminomutase 1 from Bacillus mycoides (strain KBAB4) (Bacillus weihenstephanensis).